Reading from the N-terminus, the 367-residue chain is MPSTPSFVRSAVSKYKFGAHMSGAGGISNSVTNAFNTGCNSFAMFLKSPRKWVSPQYTQEEIDKFKKNCATYNYNPLTDVLPHGQYFINLANPDREKAEKSYESFMDDLNRCEQLGIGLYNLHPGSTLKGDHQLQLKQLASYLNKAIKETKFVKIVLENMAGTGNLVGSSLVDLKEVIGMIEDKSRIGVCIDTCHTFAAGYDISTTETFNNFWKEFNDVIGFKYLSAVHLNDSKAPLGANRDLHERLGQGYLGIDVFRMIAHSEYLQGIPIVLETPYENDEGYGNEIKLMEWLESKSESELLEDKEYKEKNDTLQKLGAKSRKEQLDKFEVKQKKRAGGTKRKKATAEPSDNDILSQMTKKRKTKKE.

Zn(2+) contacts are provided by His-83, His-123, Glu-158, Asp-192, His-195, His-229, Asp-242, His-244, and Glu-274. The disordered stretch occupies residues 312 to 367; the sequence is DTLQKLGAKSRKEQLDKFEVKQKKRAGGTKRKKATAEPSDNDILSQMTKKRKTKKE. A compositionally biased stretch (basic and acidic residues) spans 321–332; sequence SRKEQLDKFEVK. Over residues 333 to 344 the composition is skewed to basic residues; it reads QKKRAGGTKRKK. At Ser-356 the chain carries Phosphoserine.

This sequence belongs to the AP endonuclease 2 family. As to quaternary structure, monomer. The cofactor is Zn(2+).

It localises to the nucleus. DNA repair enzyme that cleaves apurinic/apyrimidinic (AP) sites and removes 3'-blocking groups present at single strand breaks of damaged DNA. APN1 accounts for &gt; 97% of both apurinic/apyrimidinic (AP) endonuclease and DNA 3'-repair diesterase activities. The chain is Apurinic-apyrimidinic endonuclease 1 (APN1) from Saccharomyces cerevisiae (strain ATCC 204508 / S288c) (Baker's yeast).